Reading from the N-terminus, the 719-residue chain is Translation initiation factor IF-2 (719 aa).

Positions 54–67 (NKEETKPNVDEKPP) are enriched in basic and acidic residues. Disordered regions lie at residues 54 to 75 (NKEE…LTDN) and 97 to 122 (STKN…KRKN). Over residues 109–122 (KDKKKKNKKDKRKN) the composition is skewed to basic residues. Residues 221–390 (HRSPVVTVMG…LLVSEMSELK (170 aa)) form the tr-type G domain. The interval 230 to 237 (GHVDHGKT) is G1. 230–237 (GHVDHGKT) is a binding site for GTP. The tract at residues 255-259 (GITQH) is G2. The segment at 276 to 279 (DTPG) is G3. Residues 276–280 (DTPGH) and 330–333 (NKMD) each bind GTP. The G4 stretch occupies residues 330–333 (NKMD). Positions 366 to 368 (SAR) are G5.

It belongs to the TRAFAC class translation factor GTPase superfamily. Classic translation factor GTPase family. IF-2 subfamily.

The protein resides in the cytoplasm. Functionally, one of the essential components for the initiation of protein synthesis. Protects formylmethionyl-tRNA from spontaneous hydrolysis and promotes its binding to the 30S ribosomal subunits. Also involved in the hydrolysis of GTP during the formation of the 70S ribosomal complex. The protein is Translation initiation factor IF-2 of Alkaliphilus oremlandii (strain OhILAs) (Clostridium oremlandii (strain OhILAs)).